A 140-amino-acid chain; its full sequence is Nucleoside diphosphate kinase (140 aa).

ATP contacts are provided by K11, F59, R87, T93, R104, and N114. H117 serves as the catalytic Pros-phosphohistidine intermediate.

This sequence belongs to the NDK family. As to quaternary structure, homotetramer. Mg(2+) is required as a cofactor.

It is found in the cytoplasm. It carries out the reaction a 2'-deoxyribonucleoside 5'-diphosphate + ATP = a 2'-deoxyribonucleoside 5'-triphosphate + ADP. It catalyses the reaction a ribonucleoside 5'-diphosphate + ATP = a ribonucleoside 5'-triphosphate + ADP. Functionally, major role in the synthesis of nucleoside triphosphates other than ATP. The ATP gamma phosphate is transferred to the NDP beta phosphate via a ping-pong mechanism, using a phosphorylated active-site intermediate. In Ruegeria sp. (strain TM1040) (Silicibacter sp.), this protein is Nucleoside diphosphate kinase.